The following is a 463-amino-acid chain: MATDLLYGLLPEHILLGLILVLMLLEILSVDKRAGSALFIASLLAGAGVLVMQLQTGYTADIVMNEIRIDRFSEIGRLIIVSCGAILGVYSLSSEAGHKYWILIASSLLGAMIILDSAGFISLFMGIEILSLPGFALMVLNNGKSTASEGSIKYLLLSSVATALVLFGLSLVYGSTGNLNISSFTAAVATGGVQNLAASVMILSGFFLKASVFPFHGWAPDAYSSARLPVTAFLASIVKAAVVLGLVRILGNAVLNPEAVTVIALLSMLSMFYGNITAIHQTAFKKMLAYSSISHAGYMMFALVDNTGARTEALLYYVAVYAVTTITACACFSILSGEDDNLDNLNGIFRKKPVAAILLSLCVLSLAGIPPLPGFLAKFFVFKTVIASGHLTVAVLAFVASYIGTFFYLGVVLRMFRSDAETVEQPANATCLCWTWGGALLGTLALALFMLLPNIFHWVMTGI.

14 consecutive transmembrane segments (helical) span residues L5 to L25, A34 to L54, F72 to L92, K99 to G119, F120 to L140, Y154 to G174, L196 to H216, V230 to L250, A259 to I279, K286 to L303, L314 to I334, A356 to L376, V393 to L413, and L432 to L452.

This sequence belongs to the complex I subunit 2 family. In terms of assembly, NDH-1 is composed of 14 different subunits. Subunits NuoA, H, J, K, L, M, N constitute the membrane sector of the complex.

The protein localises to the cell inner membrane. It carries out the reaction a quinone + NADH + 5 H(+)(in) = a quinol + NAD(+) + 4 H(+)(out). In terms of biological role, NDH-1 shuttles electrons from NADH, via FMN and iron-sulfur (Fe-S) centers, to quinones in the respiratory chain. The immediate electron acceptor for the enzyme in this species is believed to be ubiquinone. Couples the redox reaction to proton translocation (for every two electrons transferred, four hydrogen ions are translocated across the cytoplasmic membrane), and thus conserves the redox energy in a proton gradient. The polypeptide is NADH-quinone oxidoreductase subunit N (Pelobacter propionicus (strain DSM 2379 / NBRC 103807 / OttBd1)).